Here is a 323-residue protein sequence, read N- to C-terminus: Aspartate carbamoyltransferase catalytic subunit (323 aa).

Residues Arg55 and Thr56 each coordinate carbamoyl phosphate. Lys83 is a binding site for L-aspartate. Carbamoyl phosphate contacts are provided by Arg105, His138, and Gln141. Arg181 and Arg235 together coordinate L-aspartate. Residues Gly276 and Pro277 each coordinate carbamoyl phosphate.

It belongs to the aspartate/ornithine carbamoyltransferase superfamily. ATCase family. In terms of assembly, heterododecamer (2C3:3R2) of six catalytic PyrB chains organized as two trimers (C3), and six regulatory PyrI chains organized as three dimers (R2).

It catalyses the reaction carbamoyl phosphate + L-aspartate = N-carbamoyl-L-aspartate + phosphate + H(+). Its pathway is pyrimidine metabolism; UMP biosynthesis via de novo pathway; (S)-dihydroorotate from bicarbonate: step 2/3. Functionally, catalyzes the condensation of carbamoyl phosphate and aspartate to form carbamoyl aspartate and inorganic phosphate, the committed step in the de novo pyrimidine nucleotide biosynthesis pathway. This Corynebacterium aurimucosum (strain ATCC 700975 / DSM 44827 / CIP 107346 / CN-1) (Corynebacterium nigricans) protein is Aspartate carbamoyltransferase catalytic subunit.